A 401-amino-acid polypeptide reads, in one-letter code: Bifunctional D-cysteine desulfhydrase/1-aminocyclopropane-1-carboxylate deaminase, mitochondrial (401 aa).

The transit peptide at 1-37 directs the protein to the mitochondrion; that stretch reads MRGRSLTLSRVKLELARRSMSATSVPSMADFLTKKPY. Residue Arg2 is modified to N-acetylserine. Lys93 is subject to N6-(pyridoxal phosphate)lysine. Residue Ser120 is the Nucleophile of the active site.

This sequence belongs to the ACC deaminase/D-cysteine desulfhydrase family. Requires pyridoxal 5'-phosphate as cofactor. Highly expressed in stems and cauline leaves, and at lower levels in roots, rosette leaves and flowers.

It is found in the mitochondrion. The enzyme catalyses D-cysteine + H2O = hydrogen sulfide + pyruvate + NH4(+) + H(+). It catalyses the reaction 1-aminocyclopropane-1-carboxylate + H2O = 2-oxobutanoate + NH4(+). Its function is as follows. Catalyzes the production of hydrogen sulfide (H2S) from cysteine. Is mainly responsible for the degradation of cysteine to generate H2S, a regulator of stomatal movement and closure. Has high affinity for D-cysteine. Functionally, possesses 1-aminocyclopropane-1-carboxylic acid (ACC) deaminase activity. Acts as a regulator of ACC levels and causes changes in ethylene levels. The chain is Bifunctional D-cysteine desulfhydrase/1-aminocyclopropane-1-carboxylate deaminase, mitochondrial (DCD) from Arabidopsis thaliana (Mouse-ear cress).